The primary structure comprises 181 residues: ATP-dependent protease subunit HslV (181 aa).

Residue T7 is part of the active site. Na(+) contacts are provided by A165, C168, and T171.

It belongs to the peptidase T1B family. HslV subfamily. In terms of assembly, a double ring-shaped homohexamer of HslV is capped on each side by a ring-shaped HslU homohexamer. The assembly of the HslU/HslV complex is dependent on binding of ATP.

It localises to the cytoplasm. The catalysed reaction is ATP-dependent cleavage of peptide bonds with broad specificity.. Its activity is regulated as follows. Allosterically activated by HslU binding. In terms of biological role, protease subunit of a proteasome-like degradation complex believed to be a general protein degrading machinery. This chain is ATP-dependent protease subunit HslV, found in Lysinibacillus sphaericus (strain C3-41).